The sequence spans 247 residues: O-methyltransferase imqG (247 aa).

S-adenosyl-L-methionine-binding positions include Glu84, 86–87, and Ala138; that span reads GT. Positions 163, 189, and 190 each coordinate a divalent metal cation. Asp163 is a substrate binding site.

Belongs to the class I-like SAM-binding methyltransferase superfamily. Cation-dependent O-methyltransferase family. CCoAMT subfamily. Homodimer. The cofactor is a divalent metal cation.

It functions in the pathway secondary metabolite biosynthesis. O-methyltransferase; part of the gene cluster that mediates the biosynthesis of imizoquins A to D, tripeptide-derived alkaloids that serve a protective role against oxidative stress that are essential for normal germination. ImqB is a canonical three-module NRPS that assembles the tripeptide backbone of the imizoquins via condensation of Trp, Tyr, and Leu-derived precursors. N-methylation by imqF and phenol oxidation by imqC, followed by cyclization via the FAD-dependent oxidase imqH carry out the three-step transformation of L-tyrosine into tetrahydroisoquinoline. Importantly, this sequence requires the presence of a free amine in the tyrosine moiety, indicating that isoquinoline formation occurs prior to peptide bond formation. The imidazolidin-4-one ring of imizoquins could form following additional oxidation of the methyl-derived bridgehead carbon by imqH. Lastly, O-methylation by imqG and leucine hydroxylation by imqE complete biosynthesis of the imizoquins. The polypeptide is O-methyltransferase imqG (Aspergillus flavus (strain ATCC 200026 / FGSC A1120 / IAM 13836 / NRRL 3357 / JCM 12722 / SRRC 167)).